The chain runs to 344 residues: MSIKYPKYPNITIIGAGSYGTAIAIALSRNGHSVLLWGHNAIHIQKLQINRCNQAYLPGIAFPPSLYLEKSLSIALSTCRNLLIAVPSRVFGHVLMRLKPNLKSNTRIIIASKGLEPKTGRLLQDVAYDILGKNIPIAIISGPTFARELAMGLPTAITLASNDTILSCDLQNILHCNKNFRIYSNTDTIGIQIAGVVKNIIAIGAGISDGIGFGSNARTALITRGLVEMSRLGIAIGATLDTFMGLAGLGDLILTCTDNQSRNRRFGILLGQGFEIHHAQKNVGKIIEGFYNIKEVYMLSVKHKVDMPITEQTYQILYQNKNVHDAAHSLLERTQKEEKINGLK.

NADPH-binding residues include Ser18, Tyr19, His39, and Lys113. Lys113, Gly142, and Thr144 together coordinate sn-glycerol 3-phosphate. Ala146 serves as a coordination point for NADPH. Sn-glycerol 3-phosphate contacts are provided by Lys198, Asp251, Ser261, Arg262, and Asn263. The active-site Proton acceptor is the Lys198. Residue Arg262 participates in NADPH binding. Residues Ile286 and Glu288 each coordinate NADPH.

Belongs to the NAD-dependent glycerol-3-phosphate dehydrogenase family.

The protein resides in the cytoplasm. The enzyme catalyses sn-glycerol 3-phosphate + NAD(+) = dihydroxyacetone phosphate + NADH + H(+). The catalysed reaction is sn-glycerol 3-phosphate + NADP(+) = dihydroxyacetone phosphate + NADPH + H(+). The protein operates within membrane lipid metabolism; glycerophospholipid metabolism. Functionally, catalyzes the reduction of the glycolytic intermediate dihydroxyacetone phosphate (DHAP) to sn-glycerol 3-phosphate (G3P), the key precursor for phospholipid synthesis. This is Glycerol-3-phosphate dehydrogenase [NAD(P)+] from Blochmanniella pennsylvanica (strain BPEN).